Reading from the N-terminus, the 363-residue chain is Adenosine deaminase (363 aa).

Ala-2 is modified (N-acetylalanine). Residues His-15 and His-17 each coordinate Zn(2+). Substrate contacts are provided by His-17 and Asp-19. N6-acetyllysine is present on Lys-54. A substrate-binding site is contributed by Gly-184. His-214 serves as a coordination point for Zn(2+). Residue Glu-217 is the Proton donor of the active site. Lys-232 carries the N6-acetyllysine modification. Asp-295 contacts Zn(2+). A substrate-binding site is contributed by Asp-296.

Belongs to the metallo-dependent hydrolases superfamily. Adenosine and AMP deaminases family. Interacts with DPP4 (via extracellular domain). Interacts with PLG (via Kringle 4 domain); the interaction stimulates PLG activation when in complex with DPP4. Zn(2+) is required as a cofactor. Expressed in gastrointestinal tissues (at protein level).

It is found in the cell membrane. The protein localises to the cell junction. The protein resides in the cytoplasmic vesicle lumen. It localises to the cytoplasm. Its subcellular location is the lysosome. The catalysed reaction is adenosine + H2O + H(+) = inosine + NH4(+). The enzyme catalyses 2'-deoxyadenosine + H2O + H(+) = 2'-deoxyinosine + NH4(+). It carries out the reaction cordycepin + H2O + H(+) = 3'-deoxyinosine + NH4(+). In terms of biological role, catalyzes the hydrolytic deamination of adenosine and 2-deoxyadenosine. Plays an important role in purine metabolism and in adenosine homeostasis. Modulates signaling by extracellular adenosine, and so contributes indirectly to cellular signaling events. Acts as a positive regulator of T-cell coactivation, by binding DPP4. Its interaction with DPP4 regulates lymphocyte-epithelial cell adhesion. Enhances dendritic cell immunogenicity by affecting dendritic cell costimulatory molecule expression and cytokines and chemokines secretion. Enhances CD4+ T-cell differentiation and proliferation. Acts as a positive modulator of adenosine receptors ADORA1 and ADORA2A, by enhancing their ligand affinity via conformational change. Stimulates plasminogen activation. Plays a role in male fertility. Plays a protective role in early postimplantation embryonic development. Also responsible for the deamination of cordycepin (3'-deoxyadenosine), a fungal natural product that shows antitumor, antibacterial, antifungal, antivirus, and immune regulation properties. The polypeptide is Adenosine deaminase (ADA) (Bos taurus (Bovine)).